A 652-amino-acid chain; its full sequence is DNA ligase (652 aa).

NAD(+)-binding positions include 29-33 (DSEYD), 78-79 (SL), and glutamate 107. Lysine 109 serves as the catalytic N6-AMP-lysine intermediate. Residues arginine 130, glutamate 164, lysine 278, and lysine 302 each coordinate NAD(+). Residues cysteine 395, cysteine 398, cysteine 413, and cysteine 418 each coordinate Zn(2+). One can recognise a BRCT domain in the interval 577–652 (VADAALSGLT…VRDEAWLESL (76 aa)).

This sequence belongs to the NAD-dependent DNA ligase family. LigA subfamily. Requires Mg(2+) as cofactor. Mn(2+) serves as cofactor.

The catalysed reaction is NAD(+) + (deoxyribonucleotide)n-3'-hydroxyl + 5'-phospho-(deoxyribonucleotide)m = (deoxyribonucleotide)n+m + AMP + beta-nicotinamide D-nucleotide.. In terms of biological role, DNA ligase that catalyzes the formation of phosphodiester linkages between 5'-phosphoryl and 3'-hydroxyl groups in double-stranded DNA using NAD as a coenzyme and as the energy source for the reaction. It is essential for DNA replication and repair of damaged DNA. This Streptococcus pneumoniae (strain Hungary19A-6) protein is DNA ligase.